The following is a 262-amino-acid chain: Protein NEGATIVE GRAVITROPIC RESPONSE OF ROOTS (262 aa).

The tract at residues 1–40 is disordered; it reads MKFFNWMQNKLGGKQENRKSNTSTSTTYAKPEPREEFSDW. Residues 43–49 carry the IGT motif motif; the sequence is SLLAIGT.

The protein belongs to the LAZY family.

Its function is as follows. Involved in the control of root gravitropism. The sequence is that of Protein NEGATIVE GRAVITROPIC RESPONSE OF ROOTS from Medicago truncatula (Barrel medic).